The sequence spans 368 residues: Peptide chain release factor 2 (368 aa).

N5-methylglutamine is present on Q250.

This sequence belongs to the prokaryotic/mitochondrial release factor family. Post-translationally, methylated by PrmC. Methylation increases the termination efficiency of RF2.

Its subcellular location is the cytoplasm. Peptide chain release factor 2 directs the termination of translation in response to the peptide chain termination codons UGA and UAA. The sequence is that of Peptide chain release factor 2 from Rickettsia africae (strain ESF-5).